The primary structure comprises 334 residues: Nucleoid-associated protein PMI0825 (334 aa).

The protein belongs to the YejK family.

It is found in the cytoplasm. The protein resides in the nucleoid. The polypeptide is Nucleoid-associated protein PMI0825 (Proteus mirabilis (strain HI4320)).